The chain runs to 202 residues: uncharacterized protein (202 aa).

In terms of domain architecture, START spans 1–202; sequence MRGILRMTVL…KGLRSAAEKR (202 aa).

May play a role in the interaction of the bacterium with animal cells. This is an uncharacterized protein from Pseudomonas aeruginosa (strain ATCC 15692 / DSM 22644 / CIP 104116 / JCM 14847 / LMG 12228 / 1C / PRS 101 / PAO1).